The following is a 635-amino-acid chain: Chaperone protein DnaK (635 aa).

Thr-198 is subject to Phosphothreonine; by autocatalysis. The interval 597 to 635 is disordered; it reads LYEQDQANNERHDTPETEKAEGDNVVDAEFQEIDDQDKK. The segment covering 604-618 has biased composition (basic and acidic residues); it reads NNERHDTPETEKAEG. Positions 620–635 are enriched in acidic residues; sequence NVVDAEFQEIDDQDKK.

This sequence belongs to the heat shock protein 70 family.

In terms of biological role, acts as a chaperone. This is Chaperone protein DnaK from Zymomonas mobilis subsp. mobilis (strain ATCC 31821 / ZM4 / CP4).